Consider the following 660-residue polypeptide: Bifunctional polymyxin resistance protein ArnA (660 aa).

The formyltransferase ArnAFT stretch occupies residues 1–304 (MKTVVFAYHD…TLGLVQGSRL (304 aa)). 86 to 88 (HLI) serves as a coordination point for (6R)-10-formyltetrahydrofolate. Catalysis depends on His-104, which acts as the Proton donor; for formyltransferase activity. (6R)-10-formyltetrahydrofolate is bound by residues Arg-114 and 136–140 (VKRAD). The segment at 314 to 660 (RRTRVLILGV…RTVDLTDKPS (347 aa)) is dehydrogenase ArnADH. Residues Asp-347 and 368 to 369 (DI) contribute to the NAD(+) site. Residues Ala-393, Tyr-398, and 432-433 (TS) contribute to the UDP-alpha-D-glucuronate site. The Proton acceptor; for decarboxylase activity role is filled by Glu-434. Residues Arg-460, Asn-492, 526–535 (KLIDGGKQKR), and Tyr-613 contribute to the UDP-alpha-D-glucuronate site. Arg-619 acts as the Proton donor; for decarboxylase activity in catalysis.

This sequence in the N-terminal section; belongs to the Fmt family. UDP-L-Ara4N formyltransferase subfamily. The protein in the C-terminal section; belongs to the NAD(P)-dependent epimerase/dehydratase family. UDP-glucuronic acid decarboxylase subfamily. Homohexamer, formed by a dimer of trimers.

The catalysed reaction is UDP-alpha-D-glucuronate + NAD(+) = UDP-beta-L-threo-pentopyranos-4-ulose + CO2 + NADH. The enzyme catalyses UDP-4-amino-4-deoxy-beta-L-arabinose + (6R)-10-formyltetrahydrofolate = UDP-4-deoxy-4-formamido-beta-L-arabinose + (6S)-5,6,7,8-tetrahydrofolate + H(+). Its pathway is nucleotide-sugar biosynthesis; UDP-4-deoxy-4-formamido-beta-L-arabinose biosynthesis; UDP-4-deoxy-4-formamido-beta-L-arabinose from UDP-alpha-D-glucuronate: step 1/3. The protein operates within nucleotide-sugar biosynthesis; UDP-4-deoxy-4-formamido-beta-L-arabinose biosynthesis; UDP-4-deoxy-4-formamido-beta-L-arabinose from UDP-alpha-D-glucuronate: step 3/3. It functions in the pathway bacterial outer membrane biogenesis; lipopolysaccharide biosynthesis. Bifunctional enzyme that catalyzes the oxidative decarboxylation of UDP-glucuronic acid (UDP-GlcUA) to UDP-4-keto-arabinose (UDP-Ara4O) and the addition of a formyl group to UDP-4-amino-4-deoxy-L-arabinose (UDP-L-Ara4N) to form UDP-L-4-formamido-arabinose (UDP-L-Ara4FN). The modified arabinose is attached to lipid A and is required for resistance to polymyxin and cationic antimicrobial peptides. The polypeptide is Bifunctional polymyxin resistance protein ArnA (Escherichia coli O157:H7).